We begin with the raw amino-acid sequence, 221 residues long: SIN3-HDAC complex-associated factor (221 aa).

Residues 112–121 (QKEFKRHNSD) are compositionally biased toward basic and acidic residues. 2 disordered regions span residues 112–152 (QKEF…MASG) and 201–221 (AAAE…TQEW). Low complexity predominate over residues 124 to 135 (STTSSASPAQSP). The span at 136-152 (CYSNQSDDGSDTEMASG) shows a compositional bias: polar residues.

It belongs to the SINHCAF family. Interacts with the Sin3/HDAC corepressor complex at least composed of BRMS1, BRMS1L, ING2, SAP30, SAP30L and HDAC1. Found in a complex composed of at least SINHCAF, SIN3A, HDAC1, SAP30, RBBP4, OGT and TET1. Interacts with SIN3A and OGT.

It localises to the nucleus. Subunit of the Sin3 deacetylase complex (Sin3/HDAC), this subunit is important for the repression of genes encoding components of the TGF-beta signaling pathway. Core component of a SIN3A complex (composed of at least SINHCAF, SIN3A, HDAC1, SAP30, RBBP4, OGT and TET1) present in embryonic stem (ES) cells. Promotes the stability of SIN3A and its presence on chromatin and is essential for maintaining the potential of ES cells to proliferate rapidly, while ensuring a short G1-phase of the cell cycle, thereby preventing premature lineage priming. In Homo sapiens (Human), this protein is SIN3-HDAC complex-associated factor.